The sequence spans 152 residues: MQLTELIETTVTGLGYELVELERTGRGMLCIYIDQPAGISLEDCEKVTRQLQHVLTVENIDYERLEVSSPGLDRPLKKLADFERFAGSEVSVTLKKPLDGRKTYRGILHAPNGETIGLEFEGKKGEAAMLDFTLADIDKARLIPQVDFRSRK.

Belongs to the RimP family.

Its subcellular location is the cytoplasm. Its function is as follows. Required for maturation of 30S ribosomal subunits. The protein is Ribosome maturation factor RimP of Burkholderia orbicola (strain MC0-3).